Here is a 138-residue protein sequence, read N- to C-terminus: Large ribosomal subunit protein uL16 (138 aa).

Positions 1–13 are enriched in basic residues; sequence MLQPARRKYRKEQ. Positions 1-22 are disordered; sequence MLQPARRKYRKEQKGRNTGVAT.

It belongs to the universal ribosomal protein uL16 family. In terms of assembly, part of the 50S ribosomal subunit.

Binds 23S rRNA and is also seen to make contacts with the A and possibly P site tRNAs. The chain is Large ribosomal subunit protein uL16 from Polaromonas naphthalenivorans (strain CJ2).